A 422-amino-acid chain; its full sequence is Cytokine receptor-like factor 1 (422 aa).

The first 37 residues, 1-37, serve as a signal peptide directing secretion; it reads MPAGRRGPAAQSARRPPPLLPLLLLLCVLGAPRAGSG. One can recognise an Ig-like C2-type domain in the interval 38–131; that stretch reads AHTAVISPQD…SILAGSCLYV (94 aa). Asn-92, Asn-104, and Asn-140 each carry an N-linked (GlcNAc...) asparagine glycan. 2 Fibronectin type-III domains span residues 137 to 232 and 237 to 341; these read KPVN…ILDV and PPPD…TPRS. Residues Cys-143 and Cys-153 are joined by a disulfide bond. Asn-168 carries N-linked (GlcNAc...) asparagine glycosylation. Cysteines 184 and 195 form a disulfide. Phosphoserine is present on Ser-219. Asn-292 carries an N-linked (GlcNAc...) asparagine glycan. The WSXWS motif signature appears at 327–331; sequence WSEWS. The interval 332–363 is disordered; the sequence is HPTAASTPRSERPGPGGGACEPRGGEPSSGPV. Asn-382 carries an N-linked (GlcNAc...) asparagine glycan. Positions 399-422 are disordered; sequence HKTRNQDEGILPSGRRGTARGPAR.

This sequence belongs to the type I cytokine receptor family. Type 3 subfamily. As to quaternary structure, forms covalent di- and tetramers. Forms a heteromeric complex with cardiotrophin-like cytokine CLCF1/CLC; the CRLF1-CLCF1 complex is a ligand for the ciliary neurotrophic factor receptor/CNTFR. The CRLF1-CLCF1 heterodimer binds SORL1 (via N-terminal ectodomain); within this complex, the interaction is mediated predominantly by the CRLF1 moiety. The tripartite signaling complex formed by CRLF1, CLCF1 and CNTFR also binds SORL1. As to expression, highest levels of expression observed in spleen, thymus, lymph node, appendix, bone marrow, stomach, placenta, heart, thyroid and ovary. Strongly expressed also in fetal lung.

The protein resides in the secreted. Its function is as follows. In complex with CLCF1, forms a heterodimeric neurotropic cytokine that plays a crucial role during neuronal development. May also play a regulatory role in the immune system. This chain is Cytokine receptor-like factor 1 (CRLF1), found in Homo sapiens (Human).